Consider the following 125-residue polypeptide: Probable growth factor FPV211 (125 aa).

Positions 1–48 are cleaved as a signal peptide; the sequence is MKEPLIEVKREYNLIKTLTGKKFVVSTSIVVVLLIINMIFYGIRIHEL. The 41-residue stretch at 80–120 folds into the EGF-like domain; the sequence is LFEKCKSKFNNFCIYGECMNIINLDKKFCICNKGYTGNRCD. 3 disulfides stabilise this stretch: C84–C97, C92–C108, and C110–C119.

The protein resides in the secreted. In Vertebrata (FPV), this protein is Probable growth factor FPV211.